We begin with the raw amino-acid sequence, 304 residues long: Glyceraldehyde-3-phosphate dehydrogenase 2 (304 aa).

Residues 1–2, D22, and R67 each bind NAD(+); that span reads RI. Residues 138–140, T169, 198–199, and R221 contribute to the D-glyceraldehyde 3-phosphate site; these read SCT and TG. C139 acts as the Nucleophile in catalysis. Residue N303 participates in NAD(+) binding.

Belongs to the glyceraldehyde-3-phosphate dehydrogenase family. In terms of assembly, homotetramer.

Its subcellular location is the cytoplasm. It catalyses the reaction D-glyceraldehyde 3-phosphate + phosphate + NAD(+) = (2R)-3-phospho-glyceroyl phosphate + NADH + H(+). It participates in carbohydrate degradation; glycolysis; pyruvate from D-glyceraldehyde 3-phosphate: step 1/5. The polypeptide is Glyceraldehyde-3-phosphate dehydrogenase 2 (Gapdh2) (Drosophila subobscura (Fruit fly)).